The chain runs to 575 residues: Dihydroxy-acid dehydratase (575 aa).

A disordered region spans residues 1 to 27 (MSNQERQERPEKDPDLRSTEVTEGYEK). Residue cysteine 61 coordinates [2Fe-2S] cluster. Aspartate 93 contributes to the Mg(2+) binding site. Cysteine 134 provides a ligand contact to [2Fe-2S] cluster. Aspartate 135 and lysine 136 together coordinate Mg(2+). At lysine 136 the chain carries N6-carboxylysine. Position 206 (cysteine 206) interacts with [2Fe-2S] cluster. Residue glutamate 460 coordinates Mg(2+). Catalysis depends on serine 486, which acts as the Proton acceptor.

Belongs to the IlvD/Edd family. In terms of assembly, homodimer. [2Fe-2S] cluster is required as a cofactor. The cofactor is Mg(2+).

It catalyses the reaction (2R)-2,3-dihydroxy-3-methylbutanoate = 3-methyl-2-oxobutanoate + H2O. The enzyme catalyses (2R,3R)-2,3-dihydroxy-3-methylpentanoate = (S)-3-methyl-2-oxopentanoate + H2O. Its pathway is amino-acid biosynthesis; L-isoleucine biosynthesis; L-isoleucine from 2-oxobutanoate: step 3/4. It participates in amino-acid biosynthesis; L-valine biosynthesis; L-valine from pyruvate: step 3/4. Functions in the biosynthesis of branched-chain amino acids. Catalyzes the dehydration of (2R,3R)-2,3-dihydroxy-3-methylpentanoate (2,3-dihydroxy-3-methylvalerate) into 2-oxo-3-methylpentanoate (2-oxo-3-methylvalerate) and of (2R)-2,3-dihydroxy-3-methylbutanoate (2,3-dihydroxyisovalerate) into 2-oxo-3-methylbutanoate (2-oxoisovalerate), the penultimate precursor to L-isoleucine and L-valine, respectively. This Haloarcula marismortui (strain ATCC 43049 / DSM 3752 / JCM 8966 / VKM B-1809) (Halobacterium marismortui) protein is Dihydroxy-acid dehydratase.